We begin with the raw amino-acid sequence, 517 residues long: Crotonobetaine/carnitine--CoA ligase (517 aa).

It belongs to the ATP-dependent AMP-binding enzyme family.

The enzyme catalyses 4-(trimethylamino)butanoate + ATP + CoA = 4-(trimethylamino)butanoyl-CoA + AMP + diphosphate. It carries out the reaction crotonobetaine + ATP + CoA = crotonobetainyl-CoA + AMP + diphosphate. It catalyses the reaction (R)-carnitine + ATP + CoA = (R)-carnitinyl-CoA + AMP + diphosphate. It participates in amine and polyamine metabolism; carnitine metabolism. Its function is as follows. Catalyzes the transfer of CoA to carnitine, generating the initial carnitinyl-CoA needed for the CaiB reaction cycle. Also has activity toward crotonobetaine and gamma-butyrobetaine. The chain is Crotonobetaine/carnitine--CoA ligase from Escherichia coli O8 (strain IAI1).